Reading from the N-terminus, the 337-residue chain is Biotin synthase (337 aa).

A Radical SAM core domain is found at Asn62 to Arg289. [4Fe-4S] cluster-binding residues include Cys77, Cys81, and Cys84. Residues Cys121, Cys152, Cys212, and Arg284 each coordinate [2Fe-2S] cluster.

It belongs to the radical SAM superfamily. Biotin synthase family. As to quaternary structure, homodimer. [4Fe-4S] cluster serves as cofactor. [2Fe-2S] cluster is required as a cofactor.

It catalyses the reaction (4R,5S)-dethiobiotin + (sulfur carrier)-SH + 2 reduced [2Fe-2S]-[ferredoxin] + 2 S-adenosyl-L-methionine = (sulfur carrier)-H + biotin + 2 5'-deoxyadenosine + 2 L-methionine + 2 oxidized [2Fe-2S]-[ferredoxin]. It participates in cofactor biosynthesis; biotin biosynthesis; biotin from 7,8-diaminononanoate: step 2/2. Its function is as follows. Catalyzes the conversion of dethiobiotin (DTB) to biotin by the insertion of a sulfur atom into dethiobiotin via a radical-based mechanism. The protein is Biotin synthase of Nitrosomonas europaea (strain ATCC 19718 / CIP 103999 / KCTC 2705 / NBRC 14298).